Reading from the N-terminus, the 115-residue chain is Large ribosomal subunit protein bL20 (115 aa).

It belongs to the bacterial ribosomal protein bL20 family.

Functionally, binds directly to 23S ribosomal RNA and is necessary for the in vitro assembly process of the 50S ribosomal subunit. It is not involved in the protein synthesizing functions of that subunit. The polypeptide is Large ribosomal subunit protein bL20 (Prochlorococcus marinus (strain MIT 9215)).